Reading from the N-terminus, the 286-residue chain is Phosphoribosylaminoimidazole-succinocarboxamide synthase (286 aa).

This sequence belongs to the SAICAR synthetase family.

It catalyses the reaction 5-amino-1-(5-phospho-D-ribosyl)imidazole-4-carboxylate + L-aspartate + ATP = (2S)-2-[5-amino-1-(5-phospho-beta-D-ribosyl)imidazole-4-carboxamido]succinate + ADP + phosphate + 2 H(+). It functions in the pathway purine metabolism; IMP biosynthesis via de novo pathway; 5-amino-1-(5-phospho-D-ribosyl)imidazole-4-carboxamide from 5-amino-1-(5-phospho-D-ribosyl)imidazole-4-carboxylate: step 1/2. In Pasteurella multocida (strain Pm70), this protein is Phosphoribosylaminoimidazole-succinocarboxamide synthase (purC).